Reading from the N-terminus, the 443-residue chain is Ribosomal protein uS12 methylthiotransferase RimO (443 aa).

Positions 8–118 (PKIGFVSLGC…VLSHIHHYVP (111 aa)) constitute an MTTase N-terminal domain. [4Fe-4S] cluster contacts are provided by C17, C53, C82, C150, C154, and C157. A Radical SAM core domain is found at 136-373 (LTPRHYAYLK…MQLQQQISTE (238 aa)). The 67-residue stretch at 376-442 (QEKIGKVLPV…EYDLWGTIVE (67 aa)) folds into the TRAM domain.

This sequence belongs to the methylthiotransferase family. RimO subfamily. [4Fe-4S] cluster is required as a cofactor.

The protein resides in the cytoplasm. The enzyme catalyses L-aspartate(89)-[ribosomal protein uS12]-hydrogen + (sulfur carrier)-SH + AH2 + 2 S-adenosyl-L-methionine = 3-methylsulfanyl-L-aspartate(89)-[ribosomal protein uS12]-hydrogen + (sulfur carrier)-H + 5'-deoxyadenosine + L-methionine + A + S-adenosyl-L-homocysteine + 2 H(+). Catalyzes the methylthiolation of an aspartic acid residue of ribosomal protein uS12. This chain is Ribosomal protein uS12 methylthiotransferase RimO, found in Proteus mirabilis (strain HI4320).